The following is a 234-amino-acid chain: Phosphoribosylaminoimidazole-succinocarboxamide synthase (234 aa).

The protein belongs to the SAICAR synthetase family.

The enzyme catalyses 5-amino-1-(5-phospho-D-ribosyl)imidazole-4-carboxylate + L-aspartate + ATP = (2S)-2-[5-amino-1-(5-phospho-beta-D-ribosyl)imidazole-4-carboxamido]succinate + ADP + phosphate + 2 H(+). Its pathway is purine metabolism; IMP biosynthesis via de novo pathway; 5-amino-1-(5-phospho-D-ribosyl)imidazole-4-carboxamide from 5-amino-1-(5-phospho-D-ribosyl)imidazole-4-carboxylate: step 1/2. The sequence is that of Phosphoribosylaminoimidazole-succinocarboxamide synthase (purC) from Pyrococcus abyssi (strain GE5 / Orsay).